Here is a 127-residue protein sequence, read N- to C-terminus: Glycine cleavage system H protein 1 (127 aa).

Residues 20–101 form the Lipoyl-binding domain; it reads SVTVGITAYA…MGEGWFFRFI (82 aa). At lysine 60 the chain carries N6-lipoyllysine.

The protein belongs to the GcvH family. In terms of assembly, the glycine cleavage system is composed of four proteins: P, T, L and H. (R)-lipoate serves as cofactor.

In terms of biological role, the glycine cleavage system catalyzes the degradation of glycine. The H protein shuttles the methylamine group of glycine from the P protein to the T protein. The sequence is that of Glycine cleavage system H protein 1 from Pseudomonas putida (strain ATCC 47054 / DSM 6125 / CFBP 8728 / NCIMB 11950 / KT2440).